We begin with the raw amino-acid sequence, 245 residues long: Octanoyltransferase (245 aa).

The 189-residue stretch at 54 to 242 (QNAHEQVWLL…SFEQIFGPII (189 aa)) folds into the BPL/LPL catalytic domain. Substrate is bound by residues 93 to 100 (RGGEFTYH), 173 to 175 (AIG), and 186 to 188 (GVS). Residue Cys-204 is the Acyl-thioester intermediate of the active site.

It belongs to the LipB family.

The protein resides in the cytoplasm. The catalysed reaction is octanoyl-[ACP] + L-lysyl-[protein] = N(6)-octanoyl-L-lysyl-[protein] + holo-[ACP] + H(+). The protein operates within protein modification; protein lipoylation via endogenous pathway; protein N(6)-(lipoyl)lysine from octanoyl-[acyl-carrier-protein]: step 1/2. Catalyzes the transfer of endogenously produced octanoic acid from octanoyl-acyl-carrier-protein onto the lipoyl domains of lipoate-dependent enzymes. Lipoyl-ACP can also act as a substrate although octanoyl-ACP is likely to be the physiological substrate. The chain is Octanoyltransferase from Bartonella henselae (strain ATCC 49882 / DSM 28221 / CCUG 30454 / Houston 1) (Rochalimaea henselae).